A 395-amino-acid chain; its full sequence is Selection and upkeep of intraepithelial T-cells protein 7 (395 aa).

An N-terminal signal peptide occupies residues 1–25; that stretch reads MMKPEFFCFSGFCVYFLFLQVVVSS. One can recognise an Ig-like V-type domain in the interval 26–141; the sequence is EKLRVTTPTR…DAAIMNLNVT (116 aa). Topologically, residues 26–248 are extracellular; sequence EKLRVTTPTR…FNRDRIWMES (223 aa). Cysteine 49 and cysteine 123 are disulfide-bonded. Asparagine 92 and asparagine 139 each carry an N-linked (GlcNAc...) asparagine glycan. The Ig-like C1-type domain maps to 142–233; that stretch reads AVGLETEIHV…TGEEKQTSII (92 aa). A disulfide bridge links cysteine 163 with cysteine 217. A helical membrane pass occupies residues 249–269; it reads LASIVWIMLSVYILYIICFYW. Over 270–287 the chain is Cytoplasmic; it reads RTGCASGCLSKCFCVVTS. Residues 288–308 form a helical membrane-spanning segment; the sequence is WPVQIVHLLFCTGTFFAIYLP. The Extracellular segment spans residues 309–329; sequence HRSRVSLSDPQFPLYNNWITE. The chain crosses the membrane as a helical span at residues 330 to 350; the sequence is LLFVILFLTICFALPIILLFI. The Cytoplasmic portion of the chain corresponds to 351-395; sequence QFQFTSLTKWEKNKDGIMDQPRLGKAHETSSLYRKKTGKSWEQEK. The disordered stretch occupies residues 371–395; it reads PRLGKAHETSSLYRKKTGKSWEQEK.

This sequence belongs to the SKINT family. In terms of tissue distribution, expressed in skin, thymus, testis and, to a lower extent, bladder.

The protein localises to the membrane. May act by engaging a cell surface molecule on immature T-cells in the embryonic thymus. This chain is Selection and upkeep of intraepithelial T-cells protein 7 (Skint7), found in Mus musculus (Mouse).